Here is a 192-residue protein sequence, read N- to C-terminus: Xanthine phosphoribosyltransferase (192 aa).

Xanthine-binding residues include Leu-20 and Asn-27. 5-phospho-alpha-D-ribose 1-diphosphate is bound at residue 128–132 (AHGEA). Lys-156 contributes to the xanthine binding site.

The protein belongs to the purine/pyrimidine phosphoribosyltransferase family. Xpt subfamily. In terms of assembly, homodimer.

It localises to the cytoplasm. The catalysed reaction is XMP + diphosphate = xanthine + 5-phospho-alpha-D-ribose 1-diphosphate. Its pathway is purine metabolism; XMP biosynthesis via salvage pathway; XMP from xanthine: step 1/1. In terms of biological role, converts the preformed base xanthine, a product of nucleic acid breakdown, to xanthosine 5'-monophosphate (XMP), so it can be reused for RNA or DNA synthesis. This chain is Xanthine phosphoribosyltransferase, found in Lactobacillus johnsonii (strain CNCM I-12250 / La1 / NCC 533).